A 704-amino-acid polypeptide reads, in one-letter code: MIVSDIEANALLESVTKFHCGVIYDYSTAEYVSYRPSDFGAYLDALEAEVARGGLIVFHNGHKYDVPALTKLAKLQLNREFHLPRENCIDTLVLSRLIHSNLKDTDMGLLRSGKLPGKRFGSHALEAWGYRLGEMKGEYKDDFKRMLEEQGEEYVDGMEWWNFNEEMMDYNVQDVVVTKALLEKLLSDKHYFPPEIDFTDVGYTTFWSESLEAVDIEHRAAWLLAKQERNGFPFDTKAIEELYVELAARRSELLRKLTETFGSWYQPKGGTEMFCHPRTGKPLPKYPRIKTPKVGGIFKKPKNKAQREGREPCELDTREYVAGAPYTPVEHVVFNPSSRDHIQKKLQEAGWVPTKYTDKGAPVVDDEVLEGVRVDDPEKQAAIDLIKEYLMIQKRIGQSAEGDKAWLRYVAEDGKIHGSVNPNGAVTGRATHAFPNLAQIPGVRSPYGEQCRAAFGAEHHLDGITGKPWVQAGIDASGLELRCLAHFMARFDNGEYAHEILNGDIHTKNQIAAELPTRDNAKTFIYGFLYGAGDEKIGQIVGAGKERGKELKKKFLENTPAIAALRESIQQTLVESSQWVAGEQQVKWKRRWIKGLDGRKVHVRSPHAALNTLLQSAGALICKLWIIKTEEMLVEKGLKHGWDGDFAYMAWVHDEIQVGCRTEEIAQVVIETAQEAMRWVGDHWNFRCLLDTEGKMGPNWAICH.

Residues 1–187 (MIVSDIEANA…TKALLEKLLS (187 aa)) are 3'-5'exonuclease. Positions 5, 7, and 174 each coordinate Mg(2+). The segment at 202 to 704 (GYTTFWSESL…KMGPNWAICH (503 aa)) is polymerase. Residues 262-338 (GSWYQPKGGT…VEHVVFNPSS (77 aa)) form a binding to host TrxA region. Residues Asp475 and Ala476 each coordinate Mg(2+). His506, Arg518, Lys522, and Tyr526 together coordinate substrate. Residue Asp654 participates in Mg(2+) binding.

The protein belongs to the DNA polymerase type-A family. Composed of two subunits. One is encoded by the phage and the other is encoded by the host thioredoxin. Interacts with DNA primase/helicase; this interaction is essential for the coordination of DNA unwinding and nucleotide polymerization on duplex DNA. Interacts with the ssDNA-binding protein. Part of the replicase complex that includes the DNA polymerase, thioredoxin, the primase/helicase and the single-stranded DNA binding protein. Requires Mg(2+) as cofactor.

The enzyme catalyses DNA(n) + a 2'-deoxyribonucleoside 5'-triphosphate = DNA(n+1) + diphosphate. Its function is as follows. Replicates viral genomic DNA. This polymerase possesses two enzymatic activities: DNA synthesis (polymerase) and an exonucleolytic activity that degrades single-stranded DNA in the 3'-5' direction. Non-processive DNA polymerase that achieves processivity by binding to host thioredoxin (TrxA). This interaction increases the rate of dNTP incorporation to yield a processivity of approximately 800 nucleotides (nt) per binding event. Interacts with DNA helicase gp4 to coordinate nucleotide polymerization with unwinding of the DNA. The leading strand is synthesized continuously while synthesis of the lagging strand requires the synthesis of oligoribonucleotides by the primase domain of gp4. The sequence is that of DNA-directed DNA polymerase from Escherichia phage T7 (Bacteriophage T7).